The following is a 569-amino-acid chain: Urease subunit alpha (569 aa).

His136, His138, and Lys219 together coordinate Ni(2+). At Lys219 the chain carries N6-carboxylysine. His221 contributes to the substrate binding site. Ni(2+)-binding residues include His248 and His274. His322 acts as the Proton donor in catalysis. Asp362 contacts Ni(2+).

It belongs to the metallo-dependent hydrolases superfamily. Urease alpha subunit family. Heterotrimer of UreA (gamma), UreB (beta) and UreC (alpha) subunits. Three heterotrimers associate to form the active enzyme. Requires Ni cation as cofactor. Post-translationally, carboxylation allows a single lysine to coordinate two nickel ions.

The protein localises to the cytoplasm. It catalyses the reaction urea + 2 H2O + H(+) = hydrogencarbonate + 2 NH4(+). It functions in the pathway nitrogen metabolism; urea degradation; CO(2) and NH(3) from urea (urease route): step 1/1. This chain is Urease subunit alpha, found in Microcystis aeruginosa (strain NIES-843 / IAM M-2473).